A 306-amino-acid polypeptide reads, in one-letter code: Prophage bactoprenol glucosyl transferase homolog (306 aa).

Residues 1 to 227 (MKISLVVPVF…ITSFSTFPLR (227 aa)) lie on the Cytoplasmic side of the membrane. A helical membrane pass occupies residues 228–248 (IWTYIGLVVASVAFIYGAWMI). The Periplasmic portion of the chain corresponds to 249–262 (LDTIIFGNAVRGYP). A helical transmembrane segment spans residues 263 to 283 (SLLVSILFLGGIQMIGIGVLG). Topologically, residues 284 to 306 (EYIGRTYIETKKRPKYIIKRVKK) are cytoplasmic.

The protein belongs to the glycosyltransferase 2 family. GtrB subfamily.

It localises to the cell inner membrane. Involved in O antigen modification. Catalyzes the transfer of the glucose residue from UDP-glucose to a lipid carrier. This chain is Prophage bactoprenol glucosyl transferase homolog (yfdH), found in Escherichia coli (strain K12).